The primary structure comprises 177 residues: MSDENNSGAAAPEAQNPGQNAAQPAVRLQILTQYIRDLSFENAVAQKGLPSGEVQPEISVQVSLDARKRPAEHQYEVISKFRVQSSNATDKSPLFLCELDYGGIFHVEGVPEDQLHPFLMIECPRMMFPFVRRIVSDMTRDGGFPPFNMDPVDFVALYRQEIARRTQAQRPADQPLS.

Residues 1–22 form a disordered region; the sequence is MSDENNSGAAAPEAQNPGQNAA. Residues 8–22 show a composition bias toward low complexity; that stretch reads GAAAPEAQNPGQNAA.

This sequence belongs to the SecB family. As to quaternary structure, homotetramer, a dimer of dimers. One homotetramer interacts with 1 SecA dimer.

It localises to the cytoplasm. Functionally, one of the proteins required for the normal export of preproteins out of the cell cytoplasm. It is a molecular chaperone that binds to a subset of precursor proteins, maintaining them in a translocation-competent state. It also specifically binds to its receptor SecA. The chain is Protein-export protein SecB from Paracoccus denitrificans (strain Pd 1222).